We begin with the raw amino-acid sequence, 511 residues long: 2'-acyl-2-O-sulfo-trehalose (hydroxy)phthioceranyltransferase PapA1 (511 aa).

It belongs to the PapA acyltransferase family.

The catalysed reaction is a (hydroxy)phthioceranyl-[(hydroxy)phthioceranic acid synthase] + 2'-palmitoyl/stearoyl-2-O-sulfo-alpha,alpha-trehalose = a 3'-(hydroxy)phthioceranyl-2'-palmitoyl/stearoyl-2-O-sulfo-alpha,alpha-trehalose + holo-[(hydroxy)phthioceranic acid synthase].. In terms of biological role, catalyzes the acylation of trehalose-2-sulfate-2'-palmitate (SL659) by adding the (hydroxy)phthioceranoyl group at the 3'-position to yield the diacylated intermediate 2-palmitoyl-3-(C43)-phthioceranyl-alpha, alpha'-D-trehalose-2'-sulfate (SL1278). The protein is 2'-acyl-2-O-sulfo-trehalose (hydroxy)phthioceranyltransferase PapA1 (papA1) of Mycobacterium bovis (strain BCG / Pasteur 1173P2).